Reading from the N-terminus, the 148-residue chain is Snaclec crotocetin (148 aa).

A signal peptide spans 1 to 23; sequence MGRLVFVSFGLLVVFLSLTGTGA. 3 cysteine pairs are disulfide-bonded: Cys27/Cys38, Cys55/Cys144, and Cys121/Cys136. Residues 34 to 145 enclose the C-type lectin domain; it reads YEGHCYKVFK…CSKTHKVVCK (112 aa).

This sequence belongs to the snaclec family. As to quaternary structure, heterodimer; disulfide-linked. In terms of tissue distribution, expressed by the venom gland.

The protein localises to the secreted. Interferes with one step of hemostasis (modulation of platelet aggregation, or coagulation cascade, for example). The polypeptide is Snaclec crotocetin (Crotalus durissus terrificus (South American rattlesnake)).